The primary structure comprises 234 residues: LexA repressor (234 aa).

Residues 26 to 46 (FDEMKEALDLASKSGIHRLIT) constitute a DNA-binding region (H-T-H motif). Residues 73–107 (ATAAAPPKGRGAFRPQVFEGGGAPPPAASPAAAAN) form a disordered region. Residues Ser-155 and Lys-192 each act as for autocatalytic cleavage activity in the active site.

This sequence belongs to the peptidase S24 family. As to quaternary structure, homodimer.

It carries out the reaction Hydrolysis of Ala-|-Gly bond in repressor LexA.. In terms of biological role, represses a number of genes involved in the response to DNA damage (SOS response), including recA and lexA. In the presence of single-stranded DNA, RecA interacts with LexA causing an autocatalytic cleavage which disrupts the DNA-binding part of LexA, leading to derepression of the SOS regulon and eventually DNA repair. In Caulobacter vibrioides (strain ATCC 19089 / CIP 103742 / CB 15) (Caulobacter crescentus), this protein is LexA repressor.